The chain runs to 264 residues: Thymidylate synthase (264 aa).

Residues Arg21 and 126–127 (RR) contribute to the dUMP site. Cys146 serves as the catalytic Nucleophile. Residues 166–169 (RSAD), Asn177, and 207–209 (HLY) each bind dUMP. Residue Asp169 participates in (6R)-5,10-methylene-5,6,7,8-tetrahydrofolate binding. Ala263 is a binding site for (6R)-5,10-methylene-5,6,7,8-tetrahydrofolate.

It belongs to the thymidylate synthase family. Bacterial-type ThyA subfamily. In terms of assembly, homodimer.

The protein localises to the cytoplasm. It carries out the reaction dUMP + (6R)-5,10-methylene-5,6,7,8-tetrahydrofolate = 7,8-dihydrofolate + dTMP. The protein operates within pyrimidine metabolism; dTTP biosynthesis. Its function is as follows. Catalyzes the reductive methylation of 2'-deoxyuridine-5'-monophosphate (dUMP) to 2'-deoxythymidine-5'-monophosphate (dTMP) while utilizing 5,10-methylenetetrahydrofolate (mTHF) as the methyl donor and reductant in the reaction, yielding dihydrofolate (DHF) as a by-product. This enzymatic reaction provides an intracellular de novo source of dTMP, an essential precursor for DNA biosynthesis. The polypeptide is Thymidylate synthase (Rhodopseudomonas palustris (strain BisB5)).